Reading from the N-terminus, the 282-residue chain is Probable endonuclease 4 (282 aa).

Residues histidine 66, histidine 106, glutamate 143, aspartate 177, histidine 180, histidine 214, aspartate 227, histidine 229, and glutamate 259 each contribute to the Zn(2+) site.

It belongs to the AP endonuclease 2 family. Zn(2+) is required as a cofactor.

The enzyme catalyses Endonucleolytic cleavage to 5'-phosphooligonucleotide end-products.. Functionally, endonuclease IV plays a role in DNA repair. It cleaves phosphodiester bonds at apurinic or apyrimidinic (AP) sites, generating a 3'-hydroxyl group and a 5'-terminal sugar phosphate. The sequence is that of Probable endonuclease 4 from Nitratidesulfovibrio vulgaris (strain DP4) (Desulfovibrio vulgaris).